Reading from the N-terminus, the 246-residue chain is 14-3-3 protein eta (246 aa).

Residue Gly2 is modified to N-acetylglycine. A phosphoserine mark is found at Ser25 and Ser59.

This sequence belongs to the 14-3-3 family. In terms of assembly, homodimer. Interacts with many nuclear hormone receptors and cofactors including AR, ESR1, ESR2, MC2R, NR3C1, NRIP1, PPARBP and THRA. Interacts with ABL1 (phosphorylated form); the interaction retains it in the cytoplasm. Weakly interacts with CDKN1B. Interacts with ARHGEF28 and CDK16. Interacts with GAB2. Interacts with KCNK18 in a phosphorylation-dependent manner. Interacts with SAMSN1. Interacts with the 'Ser-241' phosphorylated form of PDPK1. Interacts with the 'Thr-369' phosphorylated form of DAPK2. Interacts with PI4KB, TBC1D22A and TBC1D22B. Interacts with SLITRK1. Interacts with MEFV. Post-translationally, phosphorylated on Ser-59 by protein kinase C delta type catalytic subunit in a sphingosine-dependent fashion.

The protein resides in the cytoplasm. Adapter protein implicated in the regulation of a large spectrum of both general and specialized signaling pathways. Binds to a large number of partners, usually by recognition of a phosphoserine or phosphothreonine motif. Binding generally results in the modulation of the activity of the binding partner. Negatively regulates the kinase activity of PDPK1. The chain is 14-3-3 protein eta (YWHAH) from Bos taurus (Bovine).